The sequence spans 342 residues: GTPase Obg (342 aa).

The 159-residue stretch at 1–159 (MKFLDLCKVY…RTIWLRLKLI (159 aa)) folds into the Obg domain. In terms of domain architecture, OBG-type G spans 160 to 327 (ADAGLLGLPN…VLRALWAEID (168 aa)). Residues 166–173 (GLPNAGKS), 191–195 (FTTLV), 212–215 (DIPG), 279–282 (NKID), and 308–310 (SGV) contribute to the GTP site. Mg(2+) contacts are provided by S173 and T193.

Belongs to the TRAFAC class OBG-HflX-like GTPase superfamily. OBG GTPase family. Monomer. Mg(2+) serves as cofactor.

It localises to the cytoplasm. An essential GTPase which binds GTP, GDP and possibly (p)ppGpp with moderate affinity, with high nucleotide exchange rates and a fairly low GTP hydrolysis rate. Plays a role in control of the cell cycle, stress response, ribosome biogenesis and in those bacteria that undergo differentiation, in morphogenesis control. This is GTPase Obg from Cereibacter sphaeroides (strain ATCC 17029 / ATH 2.4.9) (Rhodobacter sphaeroides).